We begin with the raw amino-acid sequence, 227 residues long: Protein Saci_0792 (227 aa).

Residues 15–209 enclose the AMMECR1 domain; sequence DIGKQLIKIA…EINKNTDEII (195 aa).

This Sulfolobus acidocaldarius (strain ATCC 33909 / DSM 639 / JCM 8929 / NBRC 15157 / NCIMB 11770) protein is Protein Saci_0792.